Here is a 407-residue protein sequence, read N- to C-terminus: Phosphopentomutase (407 aa).

Asp-10, Asp-306, His-311, Asp-347, His-348, and His-359 together coordinate Mn(2+).

Belongs to the phosphopentomutase family. Mn(2+) serves as cofactor.

It localises to the cytoplasm. It carries out the reaction 2-deoxy-alpha-D-ribose 1-phosphate = 2-deoxy-D-ribose 5-phosphate. The enzyme catalyses alpha-D-ribose 1-phosphate = D-ribose 5-phosphate. It participates in carbohydrate degradation; 2-deoxy-D-ribose 1-phosphate degradation; D-glyceraldehyde 3-phosphate and acetaldehyde from 2-deoxy-alpha-D-ribose 1-phosphate: step 1/2. Its function is as follows. Isomerase that catalyzes the conversion of deoxy-ribose 1-phosphate (dRib-1-P) and ribose 1-phosphate (Rib-1-P) to deoxy-ribose 5-phosphate (dRib-5-P) and ribose 5-phosphate (Rib-5-P), respectively. This Salmonella paratyphi C (strain RKS4594) protein is Phosphopentomutase.